The primary structure comprises 268 residues: MSGKHYKGPEVSCCIKYFIFGFNVIFWFLGITFLGIGLWAWNEKGVLSNISSITDLGGFDPVWLFLVVGGVMFILGFAGCIGALRENTFLLKFFSVFLGIIFFLELTAGVLAFVFKDWIKDQLYFFINNNIRAYRDDIDLQNLIDFTQEYWQCCGAFGADDWNLNIYFNCTDSNASRERCGVPFSCCTKDPAEDVINTQCGYDARQKPEVDQQIVIYTKGCVPQFEKWLQDNLTIVAGIFIGIALLQIFGICLAQNLVSDIEAVRASW.

Residues 1 to 17 (MSGKHYKGPEVSCCIKY) are Cytoplasmic-facing. The helical transmembrane segment at 18-38 (FIFGFNVIFWFLGITFLGIGL) threads the bilayer. Residues 39 to 61 (WAWNEKGVLSNISSITDLGGFDP) are Extracellular-facing. Asn49 carries an N-linked (GlcNAc...) asparagine glycan. A helical transmembrane segment spans residues 62 to 82 (VWLFLVVGGVMFILGFAGCIG). The Cytoplasmic segment spans residues 83–92 (ALRENTFLLK). Residues 93 to 113 (FFSVFLGIIFFLELTAGVLAF) form a helical membrane-spanning segment. Over 114–232 (VFKDWIKDQL…PQFEKWLQDN (119 aa)) the chain is Extracellular. 4 disulfides stabilise this stretch: Cys153–Cys221, Cys154–Cys186, Cys170–Cys180, and Cys187–Cys200. 2 N-linked (GlcNAc...) asparagine glycosylation sites follow: Asn169 and Asn174. A glycan (N-linked (GlcNAc...) asparagine) is linked at Asn232. Residues 233 to 253 (LTIVAGIFIGIALLQIFGICL) form a helical membrane-spanning segment. At 254–268 (AQNLVSDIEAVRASW) the chain is on the cytoplasmic side.

It belongs to the tetraspanin (TM4SF) family. In terms of assembly, interacts with ADAM10; the interaction influences ADAM10 substrate specificity, endocytosis and turnover. In terms of processing, palmitoylated.

It is found in the cell membrane. Its function is as follows. Part of TspanC8 subgroup, composed of 6 members that interact with the transmembrane metalloprotease ADAM10. This interaction is required for ADAM10 exit from the endoplasmic reticulum and for enzymatic maturation and trafficking to the cell surface as well as substrate specificity. Different TspanC8/ADAM10 complexes have distinct substrates. Promotes ADAM10-mediated cleavage of CD44. Seems to regulate VE-cadherin expression in endothelial cells probably through interaction with ADAM10, promoting leukocyte transmigration. The protein is Tetraspanin-5 of Homo sapiens (Human).